Here is a 104-residue protein sequence, read N- to C-terminus: Nucleoid-associated protein Amuc_1227 (104 aa).

It belongs to the YbaB/EbfC family. As to quaternary structure, homodimer.

It localises to the cytoplasm. The protein resides in the nucleoid. Binds to DNA and alters its conformation. May be involved in regulation of gene expression, nucleoid organization and DNA protection. This is Nucleoid-associated protein Amuc_1227 from Akkermansia muciniphila (strain ATCC BAA-835 / DSM 22959 / JCM 33894 / BCRC 81048 / CCUG 64013 / CIP 107961 / Muc).